The chain runs to 258 residues: Uroplakin-1a (258 aa).

Over 1–14 (MASAAAAEAEKGSP) the chain is Cytoplasmic. The chain crosses the membrane as a helical span at residues 15 to 35 (VVVGLLVVGNIIILLSGLSLF). At 36–59 (AETIWVTADQYRVYPLMGVSGKDD) the chain is on the extracellular side. Residues 60–86 (VFAGAWIAIFCGFSFFMVASFGVGAAL) traverse the membrane as a helical segment. At 87–91 (CRRRS) the chain is on the cytoplasmic side. The helical transmembrane segment at 92–112 (MVLTYLVLMLIVYIFECASCI) threads the bilayer. Over 113–230 (TSYTHRDYMV…HIGHAIDSYT (118 aa)) the chain is Extracellular. Asparagine 170 carries N-linked (GlcNAc...) asparagine glycosylation. A helical transmembrane segment spans residues 231-252 (WGISWFGFAILMWTLPVMLIAM). Topologically, residues 253–258 (YFYTML) are cytoplasmic.

The protein belongs to the tetraspanin (TM4SF) family. In terms of assembly, homodimer; disulfide-linked. Interacts with uroplakin-2 (UPK2). As to expression, high expression restricted to ureteric urothelium (most superficial cells); low expression in prostate. Expression in normal urothelial cells is lost in culture. Some expression in tumor cell lines derived from urothelial malignancies.

It is found in the membrane. Functionally, component of the asymmetric unit membrane (AUM); a highly specialized biomembrane elaborated by terminally differentiated urothelial cells. May play an important role in normal bladder epithelial physiology, possibly in regulating membrane permeability of superficial umbrella cells or in stabilizing the apical membrane through AUM/cytoskeletal interactions. This chain is Uroplakin-1a (UPK1A), found in Homo sapiens (Human).